Here is a 556-residue protein sequence, read N- to C-terminus: Adenine deaminase (556 aa).

It belongs to the metallo-dependent hydrolases superfamily. Adenine deaminase family. Mn(2+) is required as a cofactor.

It carries out the reaction adenine + H2O + H(+) = hypoxanthine + NH4(+). The sequence is that of Adenine deaminase from Archaeoglobus fulgidus (strain ATCC 49558 / DSM 4304 / JCM 9628 / NBRC 100126 / VC-16).